We begin with the raw amino-acid sequence, 457 residues long: Protein PIN-LIKES 2 (457 aa).

Topologically, residues 1 to 15 (MSGFSSGNVNSRVVD) are lumenal. Residues 16-36 (ILSGVVPLLKLICLTVIGLLL) form a helical membrane-spanning segment. Residues 37–54 (AHPKTQLVPRATFRLLSK) lie on the Cytoplasmic side of the membrane. Residues 55–75 (LVFALFLPCLIFTELGESITL) form a helical membrane-spanning segment. Topologically, residues 76-85 (DNIVQWWFIP) are lumenal. A helical transmembrane segment spans residues 86–106 (VNVLLSAVVGSLIGYLVVLIC). Over 107-116 (RPPPEFNRFT) the chain is Cytoplasmic. Residues 117–137 (IVMTAFGNTGNLLLAIVSSVC) form a helical membrane-spanning segment. Topologically, residues 138–151 (HTKTNPFGPNCNSR) are lumenal. A helical membrane pass occupies residues 152–172 (GVSYVSFAQWVAVILVYTVVY). The Cytoplasmic portion of the chain corresponds to 173-291 (HMMEPPLEYY…PVKHILQPPT (119 aa)). The helical transmembrane segment at 292–312 (IASLLAIIIGSVPQLKSVVFG) threads the bilayer. Topologically, residues 313–322 (YDAPLSFITD) are lumenal. The chain crosses the membrane as a helical span at residues 323 to 343 (SLNIMGSAMVPSVMLVLGGML). Topologically, residues 344-356 (SEGPNESTLGLRT) are cytoplasmic. A helical transmembrane segment spans residues 357–377 (TIGISVARLLVLPLVGIGIVM). Residues 378–393 (SADKLGLISSADPMFK) are Lumenal-facing. The chain crosses the membrane as a helical span at residues 394-414 (FVLLLQYSTPSAILLGAIASL). The Cytoplasmic segment spans residues 415–424 (RGYAVREASA). The chain crosses the membrane as a helical span at residues 425–445 (LLFWQHIFALLSLTFYIVIFF). Residues 446-457 (KLTVETTVQGMQ) are Lumenal-facing.

It belongs to the auxin efflux carrier (TC 2.A.69.2) family. As to expression, expressed in seedlings, rosette and cauline leaves, flowers and siliques.

It is found in the endoplasmic reticulum membrane. Involved in cellular auxin homeostasis by regulating auxin metabolism. Regulates intracellular auxin accumulation at the endoplasmic reticulum and thus auxin availability for nuclear auxin signaling. This is Protein PIN-LIKES 2 from Arabidopsis thaliana (Mouse-ear cress).